We begin with the raw amino-acid sequence, 441 residues long: Acidic phosphoprotein (441 aa).

A signal peptide (or 24) is located at residues methionine 1–serine 15. Residues asparagine 21 and asparagine 112 are each glycosylated (N-linked (GlcNAc...) asparagine). 18 repeat units span residues glutamate 186–glutamine 193, glutamate 194–methionine 201, glutamate 202–asparagine 209, glutamate 210–asparagine 217, glutamate 218–asparagine 225, glutamate 226–asparagine 233, glutamate 234–asparagine 241, glutamate 242–asparagine 249, glutamate 250–asparagine 257, glutamate 258–asparagine 265, glutamate 266–asparagine 273, glutamate 274–asparagine 281, glutamate 282–asparagine 289, glutamate 290–asparagine 297, glutamate 298–asparagine 305, glutamate 306–asparagine 313, lysine 353–glutamate 360, and glutamine 361–glycine 368. The 16 X 8 AA tandem repeats stretch occupies residues glutamate 186–asparagine 313. The tract at residues leucine 232–valine 416 is disordered. Residues glycine 238–threonine 247 are compositionally biased toward low complexity. Residues threonine 248–asparagine 273 are compositionally biased toward acidic residues. Residues serine 294–glutamate 306 show a composition bias toward polar residues. Residues alanine 312–alanine 332 show a composition bias toward acidic residues. A compositionally biased stretch (basic and acidic residues) spans glutamate 349–lysine 371. The tract at residues lysine 353–glutamine 370 is 2 X 9 AA tandem repeats. Basic residues predominate over residues glycine 372–lysine 415.

It localises to the cell membrane. In terms of biological role, during infection, this phosphoprotein probably modulates the structure of the red cell membrane to the advantage of the parasite, although its precise function is not known. The chain is Acidic phosphoprotein (PCEMA1) from Plasmodium chabaudi.